A 522-amino-acid polypeptide reads, in one-letter code: Wax ester synthase/diacylglycerol acyltransferase 4 (522 aa).

A compositionally biased stretch (basic and acidic residues) spans 1 to 12 (MEIETRPHISGD). The segment at 1 to 20 (MEIETRPHISGDEKEEEQPL) is disordered. Over 1 to 205 (MEIETRPHIS…SDSRLLWLVK (205 aa)) the chain is Cytoplasmic. His149 acts as the Proton acceptor in catalysis. A helical membrane pass occupies residues 206 to 226 (VIWTAVILGLNTVCDALEFIV). Over 227 to 522 (TTLFVKDTET…QIAGLLYRML (296 aa)) the chain is Lumenal. Asn270 and Asn409 each carry an N-linked (GlcNAc...) asparagine glycan.

The protein in the N-terminal section; belongs to the long-chain O-acyltransferase family. In terms of tissue distribution, mostly expressed in roots, flowers and siliques.

Its subcellular location is the cell membrane. The protein localises to the endoplasmic reticulum membrane. The enzyme catalyses an acyl-CoA + a 1,2-diacyl-sn-glycerol = a triacyl-sn-glycerol + CoA. The catalysed reaction is a long chain fatty alcohol + a fatty acyl-CoA = a wax ester + CoA. It participates in glycerolipid metabolism; triacylglycerol biosynthesis. It functions in the pathway lipid metabolism. Its function is as follows. Bifunctional wax ester synthase/diacylglycerol acyltransferase. Involved in cuticular wax biosynthesis. The polypeptide is Wax ester synthase/diacylglycerol acyltransferase 4 (Arabidopsis thaliana (Mouse-ear cress)).